The chain runs to 215 residues: LysM and putative peptidoglycan-binding domain-containing protein 2 (215 aa).

The disordered stretch occupies residues 1 to 40 (MADSSPAPSLRAGGPREPRPSAPSPPPPHSRLGSEAEEAE). An N-acetylalanine modification is found at Ala2. Residues Ser5, Ser24, Ser34, and Ser58 each carry the phosphoserine modification. Positions 20 to 29 (PSAPSPPPPH) are enriched in pro residues. The LysM domain maps to 72–116 (VEHRVRAGDTLQGIALKYGVSMEQIKRANKLFTNDCIFLKKTLNI). The interval 194–215 (AKKLKGESRDEEGLYTASLYHS) is disordered.

The protein is LysM and putative peptidoglycan-binding domain-containing protein 2 (LYSMD2) of Bos taurus (Bovine).